The primary structure comprises 374 residues: Beta sliding clamp (374 aa).

Belongs to the beta sliding clamp family. As to quaternary structure, forms a ring-shaped head-to-tail homodimer around DNA which binds and tethers DNA polymerases and other proteins to the DNA. The DNA replisome complex has a single clamp-loading complex (3 tau and 1 each of delta, delta', psi and chi subunits) which binds 3 Pol III cores (1 core on the leading strand and 2 on the lagging strand) each with a beta sliding clamp dimer. Additional proteins in the replisome are other copies of gamma, psi and chi, Ssb, DNA helicase and RNA primase.

The protein localises to the cytoplasm. Functionally, confers DNA tethering and processivity to DNA polymerases and other proteins. Acts as a clamp, forming a ring around DNA (a reaction catalyzed by the clamp-loading complex) which diffuses in an ATP-independent manner freely and bidirectionally along dsDNA. Initially characterized for its ability to contact the catalytic subunit of DNA polymerase III (Pol III), a complex, multichain enzyme responsible for most of the replicative synthesis in bacteria; Pol III exhibits 3'-5' exonuclease proofreading activity. The beta chain is required for initiation of replication as well as for processivity of DNA replication. This chain is Beta sliding clamp (dnaN), found in Helicobacter pylori (strain J99 / ATCC 700824) (Campylobacter pylori J99).